Reading from the N-terminus, the 738-residue chain is Platelet endothelial cell adhesion molecule (738 aa).

Residues 1–27 form the signal peptide; sequence MQPRWAQGATMWLGVLLTLLLCSSLEG. At 28–601 the chain is on the extracellular side; the sequence is QENSFTINSV…VRVILAPWKK (574 aa). Ig-like C2-type domains are found at residues 35-121, 145-233, and 236-315; these read NSVD…KTTA, GGIV…TESF, and PKFH…SKVS. N-linked (GlcNAc...) asparagine glycosylation is found at N52, N84, and N151. The cysteines at positions 57 and 109 are disulfide-linked. 2 disulfide bridges follow: C152–C206 and C256–C304. N-linked (GlcNAc...) asparagine glycosylation is found at N301, N320, N344, N356, N453, and N551. 3 consecutive Ig-like C2-type domains span residues 328–401, 424–493, and 499–591; these read PELE…NTVQ, GQTI…EVLR, and PVDE…KILT. Intrachain disulfides connect C347–C386, C431–C476, and C523–C572. A helical transmembrane segment spans residues 602–620; sequence GLIAVVIIGVIIALLIIAA. The Cytoplasmic portion of the chain corresponds to 621–738; it reads KCYFLRKAKA…SRTEGSLDGT (118 aa). C622 is lipidated: S-palmitoyl cysteine. Residues 658–715 form a disordered region; that stretch reads EANSHYGHNDDVRNHAMKPINDNKEPLNSDVQYTEVQVSSAESHKDLGKKDTETVYSE. The span at 686-698 shows a compositional bias: polar residues; sequence SDVQYTEVQVSSA. 2 short sequence motifs (ITIM motif) span residues 688–693 and 711–716; these read VQYTEV and TVYSEV. Phosphotyrosine; by FER is present on residues Y690 and Y713. The span at 699–715 shows a compositional bias: basic and acidic residues; the sequence is ESHKDLGKKDTETVYSE. The tract at residues 709–729 is membrane-bound segment which detaches upon phosphorylation; the sequence is TETVYSEVRKAVPDAVESRYS. The may play a role in cytoprotective signaling stretch occupies residues 721-738; the sequence is PDAVESRYSRTEGSLDGT. Residues S729 and S734 each carry the phosphoserine modification.

In terms of assembly, trans-homodimer (via Ig-like C2-type 1 and Ig-like C2-type 2 domains); trans-homodimerization is required for cell-cell interaction. Forms a complex with BDKRB2 and GNAQ. Interacts with BDKRB2 and GNAQ. Interacts with PTPN11; Tyr-713 is critical for PTPN11 recruitment. Interacts with FER. Interacts (via Ig-like C2-type domain 6) with CD177; the interaction is Ca(2+)-dependent; the interaction is direct. Post-translationally, phosphorylated on Ser and Tyr residues after cellular activation by src kinases. Upon activation, phosphorylated on Ser-729 which probably initiates the dissociation of the membrane-interaction segment (residues 709-729) from the cell membrane allowing the sequential phosphorylation of Tyr-713 and Tyr-690. Constitutively phosphorylated on Ser-734 in resting platelets. Phosphorylated on tyrosine residues by FER and FES in response to FCER1 activation. In endothelial cells Fyn mediates mechanical-force (stretch or pull) induced tyrosine phosphorylation. Palmitoylation by ZDHHC21 is necessary for cell surface expression in endothelial cells and enrichment in membrane rafts. In terms of tissue distribution, expressed on platelets and leukocytes and is primarily concentrated at the borders between endothelial cells. Expressed in human umbilical vein endothelial cells (HUVECs) (at protein level). Expressed on neutrophils (at protein level). Isoform Long predominates in all tissues examined. Isoform Delta12 is detected only in trachea. Isoform Delta14-15 is only detected in lung. Isoform Delta14 is detected in all tissues examined with the strongest expression in heart. Isoform Delta15 is expressed in brain, testis, ovary, cell surface of platelets, human umbilical vein endothelial cells (HUVECs), Jurkat T-cell leukemia, human erythroleukemia (HEL) and U-937 histiocytic lymphoma cell lines (at protein level).

It localises to the cell membrane. Its subcellular location is the membrane raft. The protein localises to the cell junction. In terms of biological role, cell adhesion molecule which is required for leukocyte transendothelial migration (TEM) under most inflammatory conditions. Tyr-690 plays a critical role in TEM and is required for efficient trafficking of PECAM1 to and from the lateral border recycling compartment (LBRC) and is also essential for the LBRC membrane to be targeted around migrating leukocytes. Trans-homophilic interaction may play a role in endothelial cell-cell adhesion via cell junctions. Heterophilic interaction with CD177 plays a role in transendothelial migration of neutrophils. Homophilic ligation of PECAM1 prevents macrophage-mediated phagocytosis of neighboring viable leukocytes by transmitting a detachment signal. Promotes macrophage-mediated phagocytosis of apoptotic leukocytes by tethering them to the phagocytic cells; PECAM1-mediated detachment signal appears to be disabled in apoptotic leukocytes. Modulates bradykinin receptor BDKRB2 activation. Regulates bradykinin- and hyperosmotic shock-induced ERK1/2 activation in endothelial cells. Induces susceptibility to atherosclerosis. Does not protect against apoptosis. In Homo sapiens (Human), this protein is Platelet endothelial cell adhesion molecule (PECAM1).